A 298-amino-acid polypeptide reads, in one-letter code: uncharacterized protein (298 aa).

Positions T5 to T62 constitute an HTH lysR-type domain. Positions F22–R42 form a DNA-binding region, H-T-H motif.

This sequence belongs to the LysR transcriptional regulatory family.

This is an uncharacterized protein from Sinorhizobium fredii (strain NBRC 101917 / NGR234).